Consider the following 273-residue polypeptide: Undecaprenyl-diphosphatase (273 aa).

Transmembrane regions (helical) follow at residues 43–63 (IGNV…CWEY), 82–102 (KFVL…VLLI), 109–129 (LFNP…ILWA), 185–205 (TEFS…YDVL), 214–234 (ADLP…FVAV), and 249–269 (FAWY…LGWI).

It belongs to the UppP family.

The protein localises to the cell inner membrane. It carries out the reaction di-trans,octa-cis-undecaprenyl diphosphate + H2O = di-trans,octa-cis-undecaprenyl phosphate + phosphate + H(+). Functionally, catalyzes the dephosphorylation of undecaprenyl diphosphate (UPP). Confers resistance to bacitracin. In Laribacter hongkongensis (strain HLHK9), this protein is Undecaprenyl-diphosphatase.